The sequence spans 133 residues: Small ribosomal subunit protein uS8 (133 aa).

It belongs to the universal ribosomal protein uS8 family. As to quaternary structure, part of the 30S ribosomal subunit. Contacts proteins S5 and S12.

One of the primary rRNA binding proteins, it binds directly to 16S rRNA central domain where it helps coordinate assembly of the platform of the 30S subunit. The polypeptide is Small ribosomal subunit protein uS8 (Gloeobacter violaceus (strain ATCC 29082 / PCC 7421)).